Here is a 168-residue protein sequence, read N- to C-terminus: MKRLSIAITSLLMAASASTIAATEPPLNQQQPLEKIAPYPQAEKGMSRQVIFLEPQEDESRFKVELLIGKTIEVDCNRHMLGGNLETRTLSGWGFDYLVMDKISEPASTMMACPDNTRRPQFIAANLGDAAMQRYNSRLPIVVYVPQGVDVKYRIWEAGKDVRSAQVK.

Positions 1–21 (MKRLSIAITSLLMAASASTIA) are cleaved as a signal peptide. Residues Cys-76 and Cys-113 are joined by a disulfide bond.

It belongs to the protease inhibitor I11 (ecotin) family. As to quaternary structure, homodimer.

Its subcellular location is the periplasm. Functionally, general inhibitor of pancreatic serine proteases: inhibits chymotrypsin, trypsin, elastases, factor X, kallikrein as well as a variety of other proteases. This chain is Ecotin, found in Yersinia enterocolitica serotype O:8 / biotype 1B (strain NCTC 13174 / 8081).